We begin with the raw amino-acid sequence, 45 residues long: Mu-conotoxin-like Cal 12.1.2a (45 aa).

Intrachain disulfides connect Cys-3–Cys-16, Cys-11–Cys-28, Cys-18–Cys-33, and Cys-27–Cys-39. Pro-23 carries the post-translational modification 4-hydroxyproline. Residues Trp-37 and Trp-38 each carry the 6'-bromotryptophan modification. 4-hydroxyproline is present on Pro-40. 6'-bromotryptophan is present on Trp-44.

In terms of tissue distribution, expressed by the venom duct.

It localises to the secreted. Mu-conotoxins block voltage-gated sodium channels. This toxin reversibly blocks voltage-gated sodium channel in cephalopods, with no alteration in the voltage dependence of sodium conductance or on the kinetics of inactivation. This Californiconus californicus (California cone) protein is Mu-conotoxin-like Cal 12.1.2a.